The chain runs to 176 residues: Glutathione-regulated potassium-efflux system ancillary protein KefF (176 aa).

FMN-binding positions include His-8, 14–17 (SHAN), 65–68 (MQWY), and 105–108 (TTGG).

Belongs to the NAD(P)H dehydrogenase (quinone) family. KefF subfamily. In terms of assembly, homodimer. Interacts with KefC. FMN is required as a cofactor.

It is found in the cell inner membrane. It catalyses the reaction a quinone + NADH + H(+) = a quinol + NAD(+). The catalysed reaction is a quinone + NADPH + H(+) = a quinol + NADP(+). Regulatory subunit of a potassium efflux system that confers protection against electrophiles. Required for full activity of KefC. Shows redox enzymatic activity, but this enzymatic activity is not required for activation of KefC. This is Glutathione-regulated potassium-efflux system ancillary protein KefF from Salmonella gallinarum (strain 287/91 / NCTC 13346).